Reading from the N-terminus, the 461-residue chain is Aspartyl/glutamyl-tRNA(Asn/Gln) amidotransferase subunit B (461 aa).

Belongs to the GatB/GatE family. GatB subfamily. As to quaternary structure, heterotrimer of A, B and C subunits.

The enzyme catalyses L-glutamyl-tRNA(Gln) + L-glutamine + ATP + H2O = L-glutaminyl-tRNA(Gln) + L-glutamate + ADP + phosphate + H(+). It carries out the reaction L-aspartyl-tRNA(Asn) + L-glutamine + ATP + H2O = L-asparaginyl-tRNA(Asn) + L-glutamate + ADP + phosphate + 2 H(+). Its function is as follows. Allows the formation of correctly charged Asn-tRNA(Asn) or Gln-tRNA(Gln) through the transamidation of misacylated Asp-tRNA(Asn) or Glu-tRNA(Gln) in organisms which lack either or both of asparaginyl-tRNA or glutaminyl-tRNA synthetases. The reaction takes place in the presence of glutamine and ATP through an activated phospho-Asp-tRNA(Asn) or phospho-Glu-tRNA(Gln). The sequence is that of Aspartyl/glutamyl-tRNA(Asn/Gln) amidotransferase subunit B from Methanopyrus kandleri (strain AV19 / DSM 6324 / JCM 9639 / NBRC 100938).